The sequence spans 320 residues: Cytochrome f (320 aa).

The first 35 residues, 1 to 35 (MHTKNLFYSRPQQITQYLSAFLMMVILTRTSISSA), serve as a signal peptide directing secretion. Heme is bound by residues Tyr36, Cys56, Cys59, and His60. Residues 286-306 (VQVLLFFFASIILAQIFLVLK) traverse the membrane as a helical segment.

This sequence belongs to the cytochrome f family. In terms of assembly, the 4 large subunits of the cytochrome b6-f complex are cytochrome b6, subunit IV (17 kDa polypeptide, petD), cytochrome f and the Rieske protein, while the 4 small subunits are PetG, PetL, PetM and PetN. The complex functions as a dimer. Heme is required as a cofactor.

The protein localises to the plastid thylakoid membrane. Functionally, component of the cytochrome b6-f complex, which mediates electron transfer between photosystem II (PSII) and photosystem I (PSI), cyclic electron flow around PSI, and state transitions. This is Cytochrome f from Cuscuta obtusiflora (Peruvian dodder).